Here is a 2635-residue protein sequence, read N- to C-terminus: Protein unc-79 homolog (2635 aa).

A phosphoserine mark is found at S754 and S758. Disordered regions lie at residues G907 to E929, I1538 to R1575, L1607 to S1678, S1693 to Q1832, L1863 to R1909, and L1929 to G1950. The segment covering S1666–S1678 has biased composition (low complexity). Residues K1699–A1713 show a composition bias toward polar residues. Basic and acidic residues predominate over residues L1761–G1775. 2 stretches are compositionally biased toward polar residues: residues E1897–R1909 and L1929–I1947. A run of 2 helical transmembrane segments spans residues L2223–G2243 and V2466–C2486.

The protein belongs to the unc-79 family. NALCN complex consists of NALCN and auxiliary subunits, UNC79, UNC80 and NACL1. These auxiliary subunits are essential for the NALCN channel function. UNC80 bridges NALCN to UNC79.

It is found in the cell membrane. In terms of biological role, auxiliary subunit of the NALCN sodium channel complex, a voltage-gated ion channel responsible for the resting Na(+) permeability that controls neuronal excitability. Activated by neuropeptides substance P, neurotensin, and extracellular calcium that regulates neuronal excitability by controlling the sizes of NALCN-dependent sodium-leak current. This chain is Protein unc-79 homolog (UNC79), found in Homo sapiens (Human).